The primary structure comprises 405 residues: Putative arsenical pump-driving ATPase (405 aa).

8 to 15 (GKGGVGKT) contacts ATP.

The protein belongs to the arsA ATPase family.

The enzyme catalyses arsenite(in) + ATP + H2O = arsenite(out) + ADP + phosphate + H(+). Anion-transporting ATPase. Catalyzes the extrusion of arsenite. In Prosthecochloris vibrioformis (Chlorobium vibrioforme), this protein is Putative arsenical pump-driving ATPase.